The primary structure comprises 376 residues: DNA repair protein RAD51 homolog 3 (376 aa).

The required for Holliday junction resolution activity stretch occupies residues 1–126 (MRGKTFRFEM…LMKTTEICGA (126 aa)). Serine 20 carries the post-translational modification Phosphoserine. An interaction with RAD51B, RAD51D and XRCC3 region spans residues 79-136 (SESHKKCTALELLEQEHTQGFIITFCSALDDILGGGVPLMKTTEICGAPGVGKTQLCM). Residue 125-132 (GAPGVGKT) coordinates ATP. The short motif at 366 to 370 (RKRSR) is the Nuclear localization signal element.

This sequence belongs to the RecA family. RAD51 subfamily. Part of the RAD51 paralog protein complexes BCDX2 and CX3; the complexes have a ring-like structure arranged into a flat disc around a central channel. The BCDX2 complex consits of RAD51B, RAD51C, RAD51D and XRCC2; the CX3 complex consists of RAD51C and XRCC3. The BCDX2 subcomplex RAD51B:RAD51C interacts with RAD51. Interacts with SWSAP1; involved in homologous recombination repair. Interacts directly with PALB2 which may serve as a scaffold for a HR complex containing PALB2, BRCA2, RAD51C, RAD51 and XRCC3. Interacts with HELQ. Interacts with DNA damage up-regulated protein DDUP. In terms of tissue distribution, expressed in a variety of tissues, with highest expression in testis, heart muscle, spleen and prostate.

Its subcellular location is the nucleus. The protein localises to the cytoplasm. It localises to the perinuclear region. The protein resides in the mitochondrion. Its function is as follows. Essential for the homologous recombination (HR) pathway of DNA repair. Involved in the homologous recombination repair (HRR) pathway of double-stranded DNA breaks arising during DNA replication or induced by DNA-damaging agents. Part of the RAD51 paralog protein complexes BCDX2 and CX3 which act at different stages of the BRCA1-BRCA2-dependent HR pathway. Upon DNA damage, BCDX2 seems to act downstream of BRCA2 recruitment and upstream of RAD51 recruitment; CX3 seems to act downstream of RAD51 recruitment; both complexes bind predominantly to the intersection of the four duplex arms of the Holliday junction (HJ) and to junction of replication forks. The BCDX2 complex was originally reported to bind single-stranded DNA, single-stranded gaps in duplex DNA and specifically to nicks in duplex DNA. The BCDX2 subcomplex RAD51B:RAD51C exhibits single-stranded DNA-dependent ATPase activity suggesting an involvement in early stages of the HR pathway. Involved in RAD51 foci formation in response to DNA damage suggesting an involvement in early stages of HR probably in the invasion step. Has an early function in DNA repair in facilitating phosphorylation of the checkpoint kinase CHEK2 and thereby transduction of the damage signal, leading to cell cycle arrest and HR activation. Participates in branch migration and HJ resolution and thus is important for processing HR intermediates late in the DNA repair process; the function may be linked to the CX3 complex. Part of a PALB2-scaffolded HR complex containing BRCA2 and which is thought to play a role in DNA repair by HR. Protects RAD51 from ubiquitin-mediated degradation that is enhanced following DNA damage. Plays a role in regulating mitochondrial DNA copy number under conditions of oxidative stress in the presence of RAD51 and XRCC3. Contributes to DNA cross-link resistance, sister chromatid cohesion and genomic stability. Involved in maintaining centrosome number in mitosis. This Homo sapiens (Human) protein is DNA repair protein RAD51 homolog 3 (RAD51C).